The sequence spans 802 residues: Nuclear polyadenylated RNA-binding protein 3 (802 aa).

2 disordered regions span residues 1 to 174 (MSDE…RRET) and 252 to 293 (ALSV…RMRF). Residues 22–34 (SNSNENELMNNSS) show a composition bias toward low complexity. Acidic residues predominate over residues 37–73 (DGIEFDAPEEEREAEREEENEEQHELEDVNDEEEEDK). Thr-86 is modified (phosphothreonine). Acidic residues-rich tracts occupy residues 101 to 139 (DDDD…EEGN) and 149 to 158 (AAEDGEDEED). The segment covering 159–174 (KKDKTKDKEVELRRET) has biased composition (basic and acidic residues). A compositionally biased stretch (low complexity) spans 260-276 (STISTTASASATSGARS). Basic and acidic residues predominate over residues 277-293 (NDQRKPPLSDAQRRMRF). The RRM domain maps to 330–401 (SRLFIGNLPL…KKLILEVSSS (72 aa)). Thr-451 is subject to Phosphothreonine. Disordered stretches follow at residues 571–675 (IYGA…PMDQ) and 717–802 (MQGQ…KLQK). The segment covering 575–590 (PPLPVPNGPAVGPPPQ) has biased composition (pro residues). The segment covering 593 to 614 (YYQGYSMPPPQQQQQQPYGNYG) has biased composition (low complexity). The span at 632 to 642 (MNQSYGRYQTS) shows a compositional bias: polar residues. Low complexity-rich tracts occupy residues 651 to 661 (QIPQGYGRYQA) and 717 to 738 (MQGQ…MNSS). Residues 745–754 (TNYNGQNISA) are compositionally biased toward polar residues. A compositionally biased stretch (pro residues) spans 757-769 (SAPPMSHQPPPPQ). The segment covering 770-785 (QQQQQQQQQQQQQQQP) has biased composition (low complexity).

The protein resides in the nucleus. It localises to the nucleoplasm. Its function is as follows. May be required for packaging pre-mRNAs into ribonucleoprotein structures amenable to efficient nuclear RNA processing. Binds to poly(A)+ RNA. Appears to act in the maintenance of CLN3 mRNA levels. This chain is Nuclear polyadenylated RNA-binding protein 3 (NAB3), found in Saccharomyces cerevisiae (strain ATCC 204508 / S288c) (Baker's yeast).